The sequence spans 233 residues: Sugar fermentation stimulation protein homolog (233 aa).

It belongs to the SfsA family.

This Pyrobaculum neutrophilum (strain DSM 2338 / JCM 9278 / NBRC 100436 / V24Sta) (Thermoproteus neutrophilus) protein is Sugar fermentation stimulation protein homolog.